We begin with the raw amino-acid sequence, 179 residues long: ATP synthase subunit delta, chloroplastic (179 aa).

The protein belongs to the ATPase delta chain family. As to quaternary structure, F-type ATPases have 2 components, F(1) - the catalytic core - and F(0) - the membrane proton channel. F(1) has five subunits: alpha(3), beta(3), gamma(1), delta(1), epsilon(1). CF(0) has four main subunits: a(1), b(1), b'(1) and c(10-14). The alpha and beta chains form an alternating ring which encloses part of the gamma chain. F(1) is attached to F(0) by a central stalk formed by the gamma and epsilon chains, while a peripheral stalk is formed by the delta, b and b' chains.

The protein resides in the plastid. Its subcellular location is the chloroplast thylakoid membrane. Its function is as follows. F(1)F(0) ATP synthase produces ATP from ADP in the presence of a proton or sodium gradient. F-type ATPases consist of two structural domains, F(1) containing the extramembraneous catalytic core and F(0) containing the membrane proton channel, linked together by a central stalk and a peripheral stalk. During catalysis, ATP synthesis in the catalytic domain of F(1) is coupled via a rotary mechanism of the central stalk subunits to proton translocation. In terms of biological role, this protein is part of the stalk that links CF(0) to CF(1). It either transmits conformational changes from CF(0) to CF(1) or is implicated in proton conduction. The protein is ATP synthase subunit delta, chloroplastic of Ochrosphaera neapolitana.